The sequence spans 107 residues: Urease subunit beta (107 aa).

The protein belongs to the urease beta subunit family. In terms of assembly, heterotrimer of UreA (gamma), UreB (beta) and UreC (alpha) subunits. Three heterotrimers associate to form the active enzyme.

It localises to the cytoplasm. The catalysed reaction is urea + 2 H2O + H(+) = hydrogencarbonate + 2 NH4(+). The protein operates within nitrogen metabolism; urea degradation; CO(2) and NH(3) from urea (urease route): step 1/1. The polypeptide is Urease subunit beta (Janthinobacterium sp. (strain Marseille) (Minibacterium massiliensis)).